The following is a 353-amino-acid chain: Protein disulfide isomerase CRELD2 (353 aa).

An N-terminal signal peptide occupies residues 1 to 24; that stretch reads MRLPRRAALGLLPLLLLLPPAPEA. The CXXC motif lies at 31-34; that stretch reads CHRC. Intrachain disulfides connect cysteine 31-cysteine 34, cysteine 140-cysteine 154, cysteine 148-cysteine 166, and cysteine 168-cysteine 177. Residues 136-178 enclose the EGF-like 1 domain; the sequence is DCLACQGGSQRPCSGNGHCSGDGSRQGDGSCRCHMGYQGPLCT. The FU 1 repeat unit spans residues 193–240; that stretch reads HSICTACDESCKTCSGLTNRDCGECEVGWVLDEGACVDVDECAAEPPP. An N-linked (GlcNAc...) asparagine glycan is attached at asparagine 251. One copy of the FU 2 repeat lies at 253–302; that stretch reads SYTCEECDSSCVGCTGEGPGNCKECISGYAREHGQCADVDECSLAEKTCV. A CXXC motif is present at residues 263 to 266; that stretch reads CVGC. Cystine bridges form between cysteine 263-cysteine 266, cysteine 294-cysteine 308, cysteine 301-cysteine 317, and cysteine 319-cysteine 330. The EGF-like 2; calcium-binding domain occupies 290-331; that stretch reads DVDECSLAEKTCVRKNENCYNTPGSYVCVCPDGFEETEDACV. Residues 332-353 form a disordered region; that stretch reads PPAEAEATEGESPTQLPSREDL. Residues 342 to 353 are compositionally biased toward polar residues; sequence ESPTQLPSREDL.

Belongs to the CRELD family. As to quaternary structure, interacts with CHRNA4. Component of a complex containing at least CRELD2, MANF, MATN3 and PDIA4. As to expression, ubiquitously expressed. Highly expressed in skeletal muscle, heart, liver, kidney and placenta.

It is found in the endoplasmic reticulum. The catalysed reaction is Catalyzes the rearrangement of -S-S- bonds in proteins.. In terms of biological role, protein disulfide isomerase. Might play a role in the unfolded protein response. May regulate transport of alpha4-beta2 neuronal acetylcholine receptor. The polypeptide is Protein disulfide isomerase CRELD2 (CRELD2) (Homo sapiens (Human)).